Reading from the N-terminus, the 286-residue chain is Nucleotide-binding protein HS_1178 (286 aa).

8-15 (GRSGAGKS) lines the ATP pocket. 56-59 (DIRN) contributes to the GTP binding site.

It belongs to the RapZ-like family.

Its function is as follows. Displays ATPase and GTPase activities. This is Nucleotide-binding protein HS_1178 from Histophilus somni (strain 129Pt) (Haemophilus somnus).